Consider the following 226-residue polypeptide: ATP-dependent dethiobiotin synthetase BioD (226 aa).

Aspartate 13 to leucine 18 serves as a coordination point for ATP. Threonine 17 is a Mg(2+) binding site. The active site involves lysine 38. Residues aspartate 55, glutamate 117–glycine 120, asparagine 177–arginine 178, proline 206–valine 208, and glutamate 213 each bind ATP. Residues aspartate 55 and glutamate 117 each contribute to the Mg(2+) site.

This sequence belongs to the dethiobiotin synthetase family. As to quaternary structure, homodimer. Mg(2+) is required as a cofactor.

It is found in the cytoplasm. The catalysed reaction is (7R,8S)-7,8-diammoniononanoate + CO2 + ATP = (4R,5S)-dethiobiotin + ADP + phosphate + 3 H(+). It functions in the pathway cofactor biosynthesis; biotin biosynthesis; biotin from 7,8-diaminononanoate: step 1/2. Functionally, catalyzes a mechanistically unusual reaction, the ATP-dependent insertion of CO2 between the N7 and N8 nitrogen atoms of 7,8-diaminopelargonic acid (DAPA, also called 7,8-diammoniononanoate) to form a ureido ring. The protein is ATP-dependent dethiobiotin synthetase BioD of Aeromonas salmonicida (strain A449).